A 215-amino-acid chain; its full sequence is Sec-independent protein translocase protein TatB (215 aa).

A helical transmembrane segment spans residues 1–21 (MLDIGWTELVVIAIVLIIVVG). Disordered stretches follow at residues 95–119 (DLQK…EPVN) and 138–215 (AVSS…KGDA). Residues 145–157 (QMDRAADVPKASE) are compositionally biased toward basic and acidic residues. Basic residues predominate over residues 203–215 (SKTRAASRKKGDA).

The protein belongs to the TatB family. The Tat system comprises two distinct complexes: a TatABC complex, containing multiple copies of TatA, TatB and TatC subunits, and a separate TatA complex, containing only TatA subunits. Substrates initially bind to the TatABC complex, which probably triggers association of the separate TatA complex to form the active translocon.

It localises to the cell inner membrane. Its function is as follows. Part of the twin-arginine translocation (Tat) system that transports large folded proteins containing a characteristic twin-arginine motif in their signal peptide across membranes. Together with TatC, TatB is part of a receptor directly interacting with Tat signal peptides. TatB may form an oligomeric binding site that transiently accommodates folded Tat precursor proteins before their translocation. The protein is Sec-independent protein translocase protein TatB of Rhizobium meliloti (strain 1021) (Ensifer meliloti).